Here is a 209-residue protein sequence, read N- to C-terminus: TVP38/TMEM64 family membrane protein slr0305 (209 aa).

5 helical membrane-spanning segments follow: residues 15-35 (LGTW…VVFL), 39-59 (ILTL…YVFI), 110-130 (LSPV…NVSL), 134-154 (VIGS…GSLA), and 171-191 (LQWT…IYVT).

This sequence belongs to the TVP38/TMEM64 family.

It localises to the cell membrane. The protein is TVP38/TMEM64 family membrane protein slr0305 of Synechocystis sp. (strain ATCC 27184 / PCC 6803 / Kazusa).